Reading from the N-terminus, the 202-residue chain is MQSRNLWRILGLCLLSVGAWGQDEDFKASDDLTSISPEKRFKVSISGTEVVVTCPDVFGYDNIKWEKNDNLVEGASNRELSQKEFSEVDDSGYYACYADSIKEKSYLYLRARVCANCIEVNLMAVVTIIVADICLTLGLLLMVYYWSKTRKANAKPVMRGTGAGSRPRGQNKEKPPPVPNPDYEPIRKGQQDLYSGLNQRGI.

A signal peptide spans 1–21 (MQSRNLWRILGLCLLSVGAWG). Residues 22–122 (QDEDFKASDD…VCANCIEVNL (101 aa)) are Extracellular-facing. The region spanning 37–107 (PEKRFKVSIS…ADSIKEKSYL (71 aa)) is the Ig-like domain. A disulfide bond links cysteine 54 and cysteine 96. The chain crosses the membrane as a helical span at residues 123 to 143 (MAVVTIIVADICLTLGLLLMV). Topologically, residues 144–202 (YYWSKTRKANAKPVMRGTGAGSRPRGQNKEKPPPVPNPDYEPIRKGQQDLYSGLNQRGI) are cytoplasmic. Residues 156 to 202 (PVMRGTGAGSRPRGQNKEKPPPVPNPDYEPIRKGQQDLYSGLNQRGI) form a disordered region. Residues 170–187 (QNKEKPPPVPNPDYEPIR) are NUMB-binding region. Residues 173–200 (EKPPPVPNPDYEPIRKGQQDLYSGLNQR) enclose the ITAM domain. The proline-rich sequence stretch occupies residues 174–181 (KPPPVPNP). A phosphotyrosine mark is found at tyrosine 183 and tyrosine 194. Over residues 192–202 (DLYSGLNQRGI) the composition is skewed to polar residues.

As to quaternary structure, the TCR-CD3 complex is composed of a CD3D/CD3E and a CD3G/CD3E heterodimers that preferentially associate with TCRalpha and TCRbeta, respectively, to form TCRalpha/CD3E/CD3G and TCRbeta/CD3G/CD3E trimers. In turn, the hexamer interacts with CD3Z homodimer to form the TCR-CD3 complex. Alternatively, TCRalpha and TCRbeta can be replaced by TCRgamma and TCRdelta. Interacts with CD6. Interacts (via Proline-rich sequence) with NCK1; the interaction is ligand dependent but independent of tyrosine kinase activation. In terms of processing, phosphorylated on Tyr residues after T-cell receptor triggering by LCK in association with CD4/CD8.

Its subcellular location is the cell membrane. Functionally, part of the TCR-CD3 complex present on T-lymphocyte cell surface that plays an essential role in adaptive immune response. When antigen presenting cells (APCs) activate T-cell receptor (TCR), TCR-mediated signals are transmitted across the cell membrane by the CD3 chains CD3D, CD3E, CD3G and CD3Z. All CD3 chains contain immunoreceptor tyrosine-based activation motifs (ITAMs) in their cytoplasmic domain. Upon TCR engagement, these motifs become phosphorylated by Src family protein tyrosine kinases LCK and FYN, resulting in the activation of downstream signaling pathways. In addition of this role of signal transduction in T-cell activation, CD3E plays an essential role in correct T-cell development. Also participates in internalization and cell surface down-regulation of TCR-CD3 complexes via endocytosis sequences present in CD3E cytosolic region. In addition to its role as a TCR coreceptor, it serves as a receptor for ITPRIPL1. Ligand recognition inhibits T-cell activation by promoting interaction with NCK1, which prevents CD3E-ZAP70 interaction and blocks the ERK-NFkB signaling cascade and calcium influx. This is T-cell surface glycoprotein CD3 epsilon chain (CD3E) from Canis lupus familiaris (Dog).